Here is a 421-residue protein sequence, read N- to C-terminus: EGFR adapter protein (421 aa).

4 disordered regions span residues 18 to 94 (TFIS…PQLQ), 109 to 154 (DVQE…RLVD), 173 to 194 (EDSRPLMHSTCGSSLTSGSGCG), and 372 to 396 (PVPLTLPRPPSTRSQRSQGAYAGGT). Residues 21–30 (SSSSASSSSS) are compositionally biased toward low complexity. Positions 62–89 (FFHHHHPPAHPHPPRQQPHPHSHSHPHP) are enriched in basic residues. Basic and acidic residues predominate over residues 109-120 (DVQELSGQEHPH). The segment covering 181-194 (STCGSSLTSGSGCG) has biased composition (low complexity). The 94-residue stretch at 286-379 (WFQAGIPREI…LLPVPLTLPR (94 aa)) folds into the SH2 domain.

May interact (via SH2 domain) with Egfr (when phosphorylated). In terms of tissue distribution, detected along the wing margin, with high levels of expression in two stripes of cells on either side of the dorsal/ventral boundary and lower levels of expression in a small region at the anteroposterior boundary (at protein level). High levels of expression along two parallel stripes of cells on either side of the wing pouch dorsal/ventral boundary, and slightly lower levels of expression in a region either side of the anteroposterior boundary. Also expressed in discrete regions of the wing imaginal disk outside of the pouch. Expressed in eye imaginal disk photoreceptors with highest levels of expression in R7 photoreceptor cells.

Its function is as follows. Involved in the negative regulation of the Egfr/Ras signaling pathway. During wing morphogenesis, may function redundantly with PVRAP to inhibit Egfr activity and prevent uncontrolled cell growth. This chain is EGFR adapter protein, found in Drosophila melanogaster (Fruit fly).